The sequence spans 398 residues: E3 ubiquitin-protein ligase MARCHF11 (398 aa).

Positions Met-1 to Ser-14 are enriched in basic and acidic residues. The disordered stretch occupies residues Met-1 to Gln-158. Pro residues predominate over residues Pro-19–Gly-31. Basic and acidic residues-rich tracts occupy residues Glu-94–Leu-104 and Ala-121–Thr-130. Residues Gln-158–Thr-218 form an RING-CH-type zinc finger. Positions 166, 169, 182, 184, 192, 195, 208, and 211 each coordinate Zn(2+). Helical transmembrane passes span Met-241–Ser-261 and Ile-274–Ile-294. The YXXL motif motif lies at Tyr-367 to Leu-370. Residues Val-395–Val-398 carry the PDZ-binding motif.

Interacts (YXXL motif) with AP1M1. Interacts (via PDZ-binding motif) with LIN7A. Interacts with unidentified fucose glycoproteins. Predominantly expressed in testis. Present in early developing spermatids. Not present in spermatogonia, spermatocytes or somatic cells (i.e. peritubular, Leydig, and Sertoli cells). Present in early round spermatids at step 4, remains until step 11, then it decreases at steps 12-15, and diminishes after step 16 (at protein level). Also expressed at lower level in brain.

It localises to the cytoplasmic vesicle membrane. It carries out the reaction S-ubiquitinyl-[E2 ubiquitin-conjugating enzyme]-L-cysteine + [acceptor protein]-L-lysine = [E2 ubiquitin-conjugating enzyme]-L-cysteine + N(6)-ubiquitinyl-[acceptor protein]-L-lysine.. It participates in protein modification; protein ubiquitination. E3 ubiquitin-protein ligase that mediates polyubiquitination of CD4. E3 ubiquitin ligases accept ubiquitin from an E2 ubiquitin-conjugating enzyme in the form of a thioester and then directly transfer the ubiquitin to targeted substrates. May play a role in ubuquitin-dependent protein sorting in developmenting spermatids. The sequence is that of E3 ubiquitin-protein ligase MARCHF11 (Marchf11) from Rattus norvegicus (Rat).